We begin with the raw amino-acid sequence, 605 residues long: Threonine--tRNA ligase (605 aa).

Positions 195 to 497 are catalytic; sequence DHRKVGKELG…LIEEYAGDFP (303 aa). Zn(2+) is bound by residues Cys294, His345, and His474.

It belongs to the class-II aminoacyl-tRNA synthetase family. Homodimer. It depends on Zn(2+) as a cofactor.

The protein resides in the cytoplasm. It catalyses the reaction tRNA(Thr) + L-threonine + ATP = L-threonyl-tRNA(Thr) + AMP + diphosphate + H(+). In terms of biological role, catalyzes the attachment of threonine to tRNA(Thr) in a two-step reaction: L-threonine is first activated by ATP to form Thr-AMP and then transferred to the acceptor end of tRNA(Thr). Also edits incorrectly charged L-seryl-tRNA(Thr). The chain is Threonine--tRNA ligase from Thermosynechococcus vestitus (strain NIES-2133 / IAM M-273 / BP-1).